The primary structure comprises 106 residues: UPF0060 membrane protein AZC_0909 (106 aa).

A run of 4 helical transmembrane segments spans residues 4–24 (PLFALAALAEIAGCFAFWHVV), 27–47 (GGSPLWLAPGVLSLVAFAALL), 58–78 (AFAAYGGIYILASLGWMWAAE), and 84–104 (RFDALGAAICLAGACVILFAP).

This sequence belongs to the UPF0060 family.

The protein resides in the cell inner membrane. The polypeptide is UPF0060 membrane protein AZC_0909 (Azorhizobium caulinodans (strain ATCC 43989 / DSM 5975 / JCM 20966 / LMG 6465 / NBRC 14845 / NCIMB 13405 / ORS 571)).